A 329-amino-acid polypeptide reads, in one-letter code: Galactosylgalactosylxylosylprotein 3-beta-glucuronosyltransferase 2 (329 aa).

The Cytoplasmic portion of the chain corresponds to 1-2 (MK). The helical; Signal-anchor for type II membrane protein transmembrane segment at 3–23 (SALFSRFFILLPWILIVIIML) threads the bilayer. At 24–329 (DVDTRRPAPP…YRLDTVKIEV (306 aa)) the chain is on the lumenal side. The segment at 45-87 (VGRGGARLPPRRGGPDSGPGRGWEKRNESRPHARPRPEPPLPT) is disordered. A compositionally biased stretch (basic and acidic residues) spans 66–81 (GWEKRNESRPHARPRP). The N-linked (GlcNAc...) asparagine glycan is linked to asparagine 71. UDP-alpha-D-glucuronate is bound by residues 93-95 (PTY), aspartate 124, arginine 161, arginine 166, and 191-193 (DDD). Aspartate 193 contributes to the Mn(2+) binding site. Residues 240–249 (WRADRPFAID) form an interaction with galactose moiety of substrate glycoprotein region. The active-site Proton donor/acceptor is glutamate 279. Asparagine 298 is a glycosylation site (N-linked (GlcNAc...) asparagine). 306–308 (HTR) contributes to the UDP-alpha-D-glucuronate binding site.

It belongs to the glycosyltransferase 43 family. In terms of assembly, homodimer. It depends on Mn(2+) as a cofactor.

The protein resides in the golgi apparatus membrane. It catalyses the reaction 3-O-(beta-D-galactosyl-(1-&gt;3)-beta-D-galactosyl-(1-&gt;4)-beta-D-xylosyl)-L-seryl-[protein] + UDP-alpha-D-glucuronate = 3-O-(beta-D-GlcA-(1-&gt;3)-beta-D-Gal-(1-&gt;3)-beta-D-Gal-(1-&gt;4)-beta-D-Xyl)-L-seryl-[protein] + UDP + H(+). Its pathway is protein modification; protein glycosylation. In terms of biological role, involved in the biosynthesis of L2/HNK-1 carbohydrate epitope on both glycolipids and glycoproteins. This Canis lupus familiaris (Dog) protein is Galactosylgalactosylxylosylprotein 3-beta-glucuronosyltransferase 2 (B3GAT2).